Reading from the N-terminus, the 424-residue chain is UDP-N-acetylglucosamine 1-carboxyvinyltransferase (424 aa).

Lysine 22 to asparagine 23 contributes to the phosphoenolpyruvate binding site. A UDP-N-acetyl-alpha-D-glucosamine-binding site is contributed by arginine 93. The Proton donor role is filled by cysteine 117. The residue at position 117 (cysteine 117) is a 2-(S-cysteinyl)pyruvic acid O-phosphothioketal. UDP-N-acetyl-alpha-D-glucosamine is bound by residues lysine 162–valine 165, aspartate 307, and isoleucine 329.

The protein belongs to the EPSP synthase family. MurA subfamily.

It localises to the cytoplasm. It catalyses the reaction phosphoenolpyruvate + UDP-N-acetyl-alpha-D-glucosamine = UDP-N-acetyl-3-O-(1-carboxyvinyl)-alpha-D-glucosamine + phosphate. It functions in the pathway cell wall biogenesis; peptidoglycan biosynthesis. Functionally, cell wall formation. Adds enolpyruvyl to UDP-N-acetylglucosamine. This is UDP-N-acetylglucosamine 1-carboxyvinyltransferase from Actinobacillus pleuropneumoniae serotype 3 (strain JL03).